A 29-amino-acid polypeptide reads, in one-letter code: Cyclotide mobo-B (29 aa).

The cyclopeptide (Gly-Asn) cross-link spans 1 to 29; sequence GKPICGETCAKGKCYTPKCTCNWPICYKN. 3 disulfides stabilise this stretch: C5-C19, C9-C21, and C14-C26.

This sequence belongs to the cyclotide family. In terms of processing, this is a cyclic peptide.

In terms of biological role, probably participates in a plant defense mechanism. This Melicytus obovatus (Hymenanthera obovata) protein is Cyclotide mobo-B.